An 86-amino-acid polypeptide reads, in one-letter code: MERNNRKVLVGRVVSDKMDKTITVVVETKRNHPVYGKRINYSKKYKAHDENNVAKEGDIVRIMETRPLSATKRFRLVEVVEEAVII.

The protein belongs to the universal ribosomal protein uS17 family. In terms of assembly, part of the 30S ribosomal subunit.

Functionally, one of the primary rRNA binding proteins, it binds specifically to the 5'-end of 16S ribosomal RNA. The sequence is that of Small ribosomal subunit protein uS17 from Streptococcus gordonii (strain Challis / ATCC 35105 / BCRC 15272 / CH1 / DL1 / V288).